The primary structure comprises 158 residues: AP-1 complex subunit sigma-1A (158 aa).

At serine 147 the chain carries Phosphoserine.

This sequence belongs to the adaptor complexes small subunit family. As to quaternary structure, adaptor protein complex 1 (AP-1) is a heterotetramer composed of two large adaptins (gamma-type subunit AP1G1 and beta-type subunit AP1B1), a medium adaptin (mu-type subunit AP1M1 or AP1M2) and a small adaptin (sigma-type subunit AP1S1 or AP1S2 or AP1S3). Widely expressed.

It is found in the golgi apparatus. Its subcellular location is the cytoplasmic vesicle membrane. The protein resides in the membrane. The protein localises to the clathrin-coated pit. Functionally, subunit of clathrin-associated adaptor protein complex 1 that plays a role in protein sorting in the late-Golgi/trans-Golgi network (TGN) and/or endosomes. The AP complexes mediate both the recruitment of clathrin to membranes and the recognition of sorting signals within the cytosolic tails of transmembrane cargo molecules. This is AP-1 complex subunit sigma-1A (AP1S1) from Homo sapiens (Human).